The chain runs to 423 residues: 26S proteasome regulatory subunit 6B homolog (423 aa).

An ATP-binding site is contributed by 207-214 (GPPGTGKT).

Belongs to the AAA ATPase family.

Its subcellular location is the cytoplasm. The protein resides in the nucleus. Its function is as follows. The 26S proteasome is involved in the ATP-dependent degradation of ubiquitinated proteins. The regulatory (or ATPase) complex confers ATP dependency and substrate specificity to the 26S complex. This chain is 26S proteasome regulatory subunit 6B homolog (tbpA), found in Aspergillus niger.